The chain runs to 319 residues: Solute carrier family 25 member 34 (319 aa).

The segment at 1-22 (MNSAFSGPSSPTPGPSPPRPPL) is disordered. Positions 10–22 (SPTPGPSPPRPPL) are enriched in pro residues. 3 Solcar repeats span residues 22–115 (LWPP…MQAA), 119–212 (DGPC…AKDW), and 222–313 (LSSL…LRQR). 6 helical membrane passes run 25-45 (PLDF…TNPL), 63-83 (SYRR…RTDG), 116-138 (GVTD…GAFI), 188-209 (VNGA…FSSA), 224-244 (SLNT…IMTP), and 296-319 (LAPH…PYTH).

Belongs to the mitochondrial carrier (TC 2.A.29) family.

The protein localises to the mitochondrion inner membrane. In Danio rerio (Zebrafish), this protein is Solute carrier family 25 member 34 (slc25a34).